The chain runs to 115 residues: Evasin P1182 (115 aa).

The first 26 residues, 1 to 26 (MALNWSFRVIFVSTMWCALLKFATLG), serve as a signal peptide directing secretion. Disulfide bonds link Cys-38–Cys-58, Cys-54–Cys-94, Cys-70–Cys-99, and Cys-89–Cys-108. Residues Asn-45, Asn-72, and Asn-103 are each glycosylated (N-linked (GlcNAc...) asparagine).

The protein resides in the secreted. Its function is as follows. Salivary chemokine-binding protein which binds to host chemokines CCL2, CCL3, CCL4, CCL8 and CCL18. This chain is Evasin P1182, found in Amblyomma maculatum (Gulf Coast tick).